The primary structure comprises 325 residues: Elongation factor P--(R)-beta-lysine ligase (325 aa).

Residue 76–78 (SPE) coordinates substrate. ATP-binding positions include 100–102 (RNE) and Asn109. Tyr118 contributes to the substrate binding site. 244–245 (EL) provides a ligand contact to ATP. Glu251 lines the substrate pocket. ATP is bound at residue Gly300.

Belongs to the class-II aminoacyl-tRNA synthetase family. EpmA subfamily. As to quaternary structure, homodimer.

The enzyme catalyses D-beta-lysine + L-lysyl-[protein] + ATP = N(6)-((3R)-3,6-diaminohexanoyl)-L-lysyl-[protein] + AMP + diphosphate + H(+). Its function is as follows. With EpmB is involved in the beta-lysylation step of the post-translational modification of translation elongation factor P (EF-P) on 'Lys-34'. Catalyzes the ATP-dependent activation of (R)-beta-lysine produced by EpmB, forming a lysyl-adenylate, from which the beta-lysyl moiety is then transferred to the epsilon-amino group of EF-P 'Lys-34'. This chain is Elongation factor P--(R)-beta-lysine ligase, found in Salmonella arizonae (strain ATCC BAA-731 / CDC346-86 / RSK2980).